A 51-amino-acid chain; its full sequence is Large ribosomal subunit protein eL39 (51 aa).

The interval 1–23 (MSALKKSFIKRKLAKKQKQNRPM) is disordered. Over residues 7–19 (SFIKRKLAKKQKQ) the composition is skewed to basic residues.

It belongs to the eukaryotic ribosomal protein eL39 family. In terms of assembly, interacts with impact.

This is Large ribosomal subunit protein eL39 (rpl-39) from Caenorhabditis elegans.